A 611-amino-acid polypeptide reads, in one-letter code: Depudecin biosynthesis cluster-specific transcription activator DEP6 (611 aa).

Positions 17-44 form a DNA-binding region, zn(2)-C6 fungal-type; sequence CEICRQRKVRCDRALPRCRRCERLNQAC. A disordered region spans residues 76-125; it reads DAPRGPASSMSSQSRSDSAAPAASRVPSVSASVPNSAATNPMDMVGTRSS. Low complexity predominate over residues 78 to 113; that stretch reads PRGPASSMSSQSRSDSAAPAASRVPSVSASVPNSAA.

It is found in the nucleus. In terms of biological role, transcription factor that positively regulates the expression of the gene cluster that mediates the biosynthesis of depudecin, a highly oxidized eleven-carbon linear polyketide that acts as a histone deacetylase (HDAC) inhibitor and makes a small contribution to pathogenesis. The chain is Depudecin biosynthesis cluster-specific transcription activator DEP6 from Fusarium langsethiae.